The following is a 294-amino-acid chain: Indole-3-glycerol phosphate synthase (294 aa).

It belongs to the TrpC family.

It catalyses the reaction 1-(2-carboxyphenylamino)-1-deoxy-D-ribulose 5-phosphate + H(+) = (1S,2R)-1-C-(indol-3-yl)glycerol 3-phosphate + CO2 + H2O. Its pathway is amino-acid biosynthesis; L-tryptophan biosynthesis; L-tryptophan from chorismate: step 4/5. This is Indole-3-glycerol phosphate synthase from Crocosphaera subtropica (strain ATCC 51142 / BH68) (Cyanothece sp. (strain ATCC 51142)).